The following is a 603-amino-acid chain: Probable methyltransferase-like protein 25 (603 aa).

The disordered stretch occupies residues threonine 326–glutamate 352.

Probable methyltransferase. This Homo sapiens (Human) protein is Probable methyltransferase-like protein 25 (METTL25).